Here is a 129-residue protein sequence, read N- to C-terminus: MGKAKAPRRLADNEARAVLRTIRISPQKLNLVAALIRGKKVATALSDLEFSAKRISGTVKKTLESAIANAENNHDLDVDALVVAEAYVGKSIVMKRFHARGRGRASRIEKPFSHLTIVVREVEEKGEAA.

Belongs to the universal ribosomal protein uL22 family. As to quaternary structure, part of the 50S ribosomal subunit.

Functionally, this protein binds specifically to 23S rRNA; its binding is stimulated by other ribosomal proteins, e.g. L4, L17, and L20. It is important during the early stages of 50S assembly. It makes multiple contacts with different domains of the 23S rRNA in the assembled 50S subunit and ribosome. The globular domain of the protein is located near the polypeptide exit tunnel on the outside of the subunit, while an extended beta-hairpin is found that lines the wall of the exit tunnel in the center of the 70S ribosome. The protein is Large ribosomal subunit protein uL22 of Mesorhizobium japonicum (strain LMG 29417 / CECT 9101 / MAFF 303099) (Mesorhizobium loti (strain MAFF 303099)).